Consider the following 633-residue polypeptide: Rab11 family-interacting protein 4 (633 aa).

2 EF-hand domains span residues Leu-17 to Gly-52 and Ala-50 to Cys-85. Residues Asp-30, Asp-32, Asp-34, Asp-63, Asn-65, Arg-69, and Asp-74 each contribute to the Ca(2+) site. Disordered stretches follow at residues Ser-152 to Leu-182 and Gly-218 to Arg-257. A compositionally biased stretch (polar residues) spans Thr-238–Gln-254. The stretch at Ala-410–Tyr-613 forms a coiled coil. Positions Glu-570–Lys-632 constitute an FIP-RBD domain.

In terms of assembly, homodimer. Forms a complex with Rab11 (rab11a or rab11b) and arf6.

The protein localises to the recycling endosome membrane. It is found in the cleavage furrow. The protein resides in the midbody. It localises to the cytoplasmic vesicle. Functionally, acts as a regulator of endocytic traffic by participating in membrane delivery. Required for the abscission step in cytokinesis, possibly by acting as an 'address tag' delivering recycling endosome membranes to the cleavage furrow during late cytokinesis. The polypeptide is Rab11 family-interacting protein 4 (rab11fip4) (Xenopus tropicalis (Western clawed frog)).